The sequence spans 599 residues: CAP-Gly domain-containing linker protein 4 (599 aa).

3 ANK repeats span residues 65–101, 149–180, and 186–215; these read TSVS…NVND, TNMN…DVDA, and NFGT…NPAF. One can recognise a CAP-Gly 1 domain in the interval 303–345; that stretch reads GTTEFASGQWAGIELDEPEGKNNGSVGRVQYFKCAPKYGIFAP. A disordered region spans residues 387 to 482; that stretch reads SGLMTSKKEN…TSAANNTHRE (96 aa). Residues 443–462 show a composition bias toward low complexity; the sequence is LSTSSSSGKKTLSKSPSLPS. Residues 468–478 are compositionally biased toward polar residues; the sequence is LKSSTTSAANN. The 43-residue stretch at 505–547 folds into the CAP-Gly 2 domain; sequence GTTNFAPGYWYGIELEKPHGKNDGSVGGVQYFSCSPRYGIFAP. The residue at position 557 (Ser-557) is a Phosphoserine. Residues 565-599 form a disordered region; that stretch reads SSNKQNHSYPGFRRSFSTTSASSQKEINRRNAFAK. A compositionally biased stretch (low complexity) spans 576 to 587; it reads FRRSFSTTSASS.

In Rattus norvegicus (Rat), this protein is CAP-Gly domain-containing linker protein 4 (Clip4).